Consider the following 109-residue polypeptide: Antifungal protein ginkbilobin-like protein (109 aa).

Positions 4 to 109 (TNFVSSACNT…CFIQYEQHSF (106 aa)) constitute a Gnk2-homologous domain. Disulfide bonds link Cys-11/Cys-87, Cys-63/Cys-72, and Cys-75/Cys-100. Asn-12 provides a ligand contact to alpha-D-mannopyranose. Arg-94 and Glu-105 together coordinate alpha-D-mannopyranose.

Its function is as follows. Exerts antifungal activity through its carbohydrate-binding specificity. The protein is Antifungal protein ginkbilobin-like protein of Picea abies (Norway spruce).